We begin with the raw amino-acid sequence, 464 residues long: Agamous-like MADS-box protein AGL92 (464 aa).

The 60-residue stretch at 1–60 (MRTKTKLVLIPDRHFRRATFRKRNAGIRKKLHELTTLCDIKACAVIYSPFENPTVWPSTE) folds into the MADS-box domain. A coiled-coil region spans residues 85-114 (ETFLRDQITKEQNKLESLRRENRETQLKHF). A disordered region spans residues 443–464 (TSTGHMPSTTTTTTNNNNNNNV). Low complexity predominate over residues 451–464 (TTTTTTNNNNNNNV).

In terms of assembly, interacts with AGL62.

It is found in the nucleus. Putative transcription factor. This Arabidopsis thaliana (Mouse-ear cress) protein is Agamous-like MADS-box protein AGL92 (AGL92).